An 861-amino-acid polypeptide reads, in one-letter code: DNA mismatch repair protein MutS (861 aa).

618 to 625 lines the ATP pocket; the sequence is GPNMGGKS.

Belongs to the DNA mismatch repair MutS family.

Its function is as follows. This protein is involved in the repair of mismatches in DNA. It is possible that it carries out the mismatch recognition step. This protein has a weak ATPase activity. In Shewanella sp. (strain ANA-3), this protein is DNA mismatch repair protein MutS.